The sequence spans 221 residues: Urease accessory protein UreF (221 aa).

It belongs to the UreF family. In terms of assembly, ureD, UreF and UreG form a complex that acts as a GTP-hydrolysis-dependent molecular chaperone, activating the urease apoprotein by helping to assemble the nickel containing metallocenter of UreC. The UreE protein probably delivers the nickel.

Its subcellular location is the cytoplasm. Functionally, required for maturation of urease via the functional incorporation of the urease nickel metallocenter. The protein is Urease accessory protein UreF of Vibrio parahaemolyticus.